The following is a 78-amino-acid chain: Large ribosomal subunit protein bL28 (78 aa).

The interval M1 to N23 is disordered.

It belongs to the bacterial ribosomal protein bL28 family.

The sequence is that of Large ribosomal subunit protein bL28 from Shewanella frigidimarina (strain NCIMB 400).